Consider the following 192-residue polypeptide: Putative 3-methyladenine DNA glycosylase (192 aa).

This sequence belongs to the DNA glycosylase MPG family.

The polypeptide is Putative 3-methyladenine DNA glycosylase (Bdellovibrio bacteriovorus (strain ATCC 15356 / DSM 50701 / NCIMB 9529 / HD100)).